Reading from the N-terminus, the 472-residue chain is Argininosuccinate lyase (472 aa).

Belongs to the lyase 1 family. Argininosuccinate lyase subfamily.

The protein localises to the cytoplasm. It carries out the reaction 2-(N(omega)-L-arginino)succinate = fumarate + L-arginine. Its pathway is amino-acid biosynthesis; L-arginine biosynthesis; L-arginine from L-ornithine and carbamoyl phosphate: step 3/3. The protein is Argininosuccinate lyase of Synechococcus sp. (strain CC9902).